The primary structure comprises 468 residues: Tapasin-related protein (468 aa).

The signal sequence occupies residues 1–18 (MGTQEGWCLLLCLALSGA). Over 19-405 (AETKPHPAEG…STQVVPPERR (387 aa)) the chain is Lumenal. One can recognise an Ig-like V-type domain in the interval 181–297 (PQGTVRTAVE…SLYRAQQIIQ (117 aa)). Cystine bridges form between Cys-212–Cys-283 and Cys-321–Cys-382. The region spanning 304 to 394 (PKVRLSLANE…THISLEEPLG (91 aa)) is the Ig-like C1-type domain. The helical transmembrane segment at 406–426 (TALGVIFASSLFLLALMFLGL) threads the bilayer. At 427–468 (QRRQAPTGLGLLQAERWETTSCADTQSSHLHEDRTARVSQPS) the chain is on the cytoplasmic side. Residues 449 to 468 (ADTQSSHLHEDRTARVSQPS) form a disordered region.

As to quaternary structure, interacts with peptide-free HLA-A*02-B2M complexes or those loaded with low affinity peptides, likely facilitating peptide exchange onto higher affinity peptides. Interacts with MR1 in a ligand-independent way; this interaction may stabilize MR1 pool and facilitate ligand loading and dissociation.

The protein resides in the cell membrane. The protein localises to the endoplasmic reticulum membrane. Its subcellular location is the microsome membrane. It is found in the golgi apparatus membrane. Component of the antigen processing and presentation pathway, which binds to MHC class I coupled with beta2-microglobulin/B2M. Association between TAPBPR and MHC class I occurs in the absence of a functional peptide-loading complex (PLC). The polypeptide is Tapasin-related protein (TAPBPL) (Homo sapiens (Human)).